The chain runs to 162 residues: MGLETEKADVQLFMDDDSYSRHSSVDYADPDKFVDPGSDRDPHRLNSHLKVGFEDVIAEPVSTHSFDKVWICSHALFEMSKYVIYKFLTVFLAIPLAFAAGILFATLSCLHIWIIMPFVKTCLMVLPSVQTIWKSVTDVVIAPLCTSVGRSFSSVSLQLSHD.

Over 1 to 86 (MGLETEKADV…FEMSKYVIYK (86 aa)) the chain is Cytoplasmic. Residue Tyr-19 is modified to Phosphotyrosine; by SRC. Phosphoserine occurs at positions 20 and 23. Phosphotyrosine; by SRC is present on Tyr-27. An intramembrane region (helical) is located at residues 87 to 107 (FLTVFLAIPLAFAAGILFATL). The Cytoplasmic portion of the chain corresponds to 108–162 (SCLHIWIIMPFVKTCLMVLPSVQTIWKSVTDVVIAPLCTSVGRSFSSVSLQLSHD).

Belongs to the caveolin family. Monomer or homodimer. Interacts with CAV1; the interaction forms a stable heterooligomeric complex that is required for targeting to lipid rafts and for caveolae formation. Tyrosine phosphorylated forms do not form heterooligomers with the Tyr-19-phosphorylated form existing as a monomer or dimer, and the Tyr-27-form as a monomer only. Interacts (tyrosine phosphorylated form) with the SH2 domain-containing proteins, RASA1, NCK1 and SRC. Interacts (tyrosine phosphorylated form) with INSR, the interaction (Tyr-27-phosphorylated form) is increased on insulin stimulation. Interacts (Tyr-19 phosphorylated form) with MAPK1 (phosphorylated form); the interaction, promoted by insulin, leads to nuclear location and MAPK1 activation. Interacts with STAT3; the interaction is increased on insulin-induced tyrosine phosphorylation leading to STAT activation. In terms of processing, phosphorylated on serine and tyrosine residues. CAV1 promotes phosphorylation on Ser-23 which then targets the complex to the plasma membrane, lipid rafts and caveolae. Phosphorylation on both Tyr-19 and Tyr-27 is required for insulin-induced 'Ser-727' phosphorylation of STAT3 and its activation. Phosphorylation on Tyr-19 is required for insulin-induced phosphorylation of MAPK1 and DNA binding of STAT3. Tyrosine phosphorylation is induced by both EGF and insulin.

The protein resides in the nucleus. Its subcellular location is the cytoplasm. It is found in the golgi apparatus membrane. The protein localises to the cell membrane. It localises to the membrane. The protein resides in the caveola. In terms of biological role, may act as a scaffolding protein within caveolar membranes. Interacts directly with G-protein alpha subunits and can functionally regulate their activity. Acts as an accessory protein in conjunction with CAV1 in targeting to lipid rafts and driving caveolae formation. Positive regulator of cellular mitogenesis of the MAPK signaling pathway. Required for the insulin-stimulated nuclear translocation and activation of MAPK1 and STAT3, and the subsequent regulation of cell cycle progression. This Muntiacus muntjak (Barking deer) protein is Caveolin-2 (CAV2).